Consider the following 119-residue polypeptide: Large ribosomal subunit protein bL20 (119 aa).

Belongs to the bacterial ribosomal protein bL20 family.

Functionally, binds directly to 23S ribosomal RNA and is necessary for the in vitro assembly process of the 50S ribosomal subunit. It is not involved in the protein synthesizing functions of that subunit. This chain is Large ribosomal subunit protein bL20, found in Coxiella burnetii (strain CbuK_Q154) (Coxiella burnetii (strain Q154)).